The primary structure comprises 360 residues: Protein Wnt-2 (360 aa).

An N-terminal signal peptide occupies residues 1-25 (MNVPLGGIWLWLPLLLTWLTPEVSS). 11 disulfides stabilise this stretch: Cys76-Cys87, Cys127-Cys135, Cys137-Cys157, Cys206-Cys220, Cys208-Cys215, Cys278-Cys309, Cys294-Cys304, Cys308-Cys348, Cys324-Cys339, Cys326-Cys336, and Cys331-Cys332. Ser212 is lipidated: O-palmitoleoyl serine; by PORCN. A glycan (N-linked (GlcNAc...) asparagine) is linked at Asn295.

This sequence belongs to the Wnt family. In terms of processing, palmitoleoylation is required for efficient binding to frizzled receptors. Depalmitoleoylation leads to Wnt signaling pathway inhibition. As to expression, in embryos in the developing allantois, pericardium heart, and ventral-lateral mesoderm; in adults in lung, brain, heart and placenta.

The protein resides in the secreted. The protein localises to the extracellular space. It is found in the extracellular matrix. Its function is as follows. Ligand for members of the frizzled family of seven transmembrane receptors. Functions in the canonical Wnt/beta-catenin signaling pathway. Functions as a upstream regulator of FGF10 expression. Plays an important role in embryonic lung development. May contribute to embryonic brain development by regulating the proliferation of dopaminergic precursors and neurons. The protein is Protein Wnt-2 (Wnt2) of Mus musculus (Mouse).